Consider the following 153-residue polypeptide: Nuclear cap-binding protein subunit 2 (153 aa).

Residues tyrosine 17, tyrosine 40, 109–113, 120–124, and 130–131 contribute to the mRNA site; these read RTDWD, RQYGR, and QV. One can recognise an RRM domain in the interval 37–115; sequence CTLYVGNLSF…RIVRTDWDAG (79 aa).

It belongs to the RRM NCBP2 family. In terms of assembly, component of the nuclear cap-binding complex (CBC), a heterodimer composed of ncbp1/cbp80 and ncbp2/cbp20 that interacts with m7GpppG-capped RNA.

It localises to the nucleus. The protein resides in the cytoplasm. Component of the cap-binding complex (CBC), which binds co-transcriptionally to the 5' cap of pre-mRNAs and is involved in various processes such as pre-mRNA splicing, translation regulation, nonsense-mediated mRNA decay, RNA-mediated gene silencing (RNAi) by microRNAs (miRNAs) and mRNA export. The CBC complex is involved in mRNA export from the nucleus, leading to the recruitment of the mRNA export machinery to the 5' end of mRNA and to mRNA export in a 5' to 3' direction through the nuclear pore. The CBC complex is also involved in mediating U snRNA and intronless mRNAs export from the nucleus. The CBC complex is essential for a pioneer round of mRNA translation, before steady state translation when the CBC complex is replaced by cytoplasmic cap-binding protein eIF4E. The pioneer round of mRNA translation mediated by the CBC complex plays a central role in nonsense-mediated mRNA decay (NMD), NMD only taking place in mRNAs bound to the CBC complex, but not on eIF4E-bound mRNAs. The CBC complex enhances NMD in mRNAs containing at least one exon-junction complex (EJC), promoting the interaction between upf1 and upf2. The CBC complex is also involved in 'failsafe' NMD, which is independent of the EJC complex, while it does not participate in Staufen-mediated mRNA decay (SMD). During cell proliferation, the CBC complex is also involved in microRNAs (miRNAs) biogenesis via its interaction with srrt/ars2, thereby being required for miRNA-mediated RNA interference. The CBC complex also acts as a negative regulator of parn, thereby acting as an inhibitor of mRNA deadenylation. In the CBC complex, ncbp2/cbp20 recognizes and binds capped RNAs (m7GpppG-capped RNA) but requires ncbp1/cbp80 to stabilize the movement of its N-terminal loop and lock the CBC into a high affinity cap-binding state with the cap structure. The conventional cap-binding complex with NCBP2 binds both small nuclear RNA (snRNA) and messenger (mRNA) and is involved in their export from the nucleus. The chain is Nuclear cap-binding protein subunit 2 (ncbp2) from Xenopus laevis (African clawed frog).